The sequence spans 47 residues: Delta-ctenitoxin-Asp2e (47 aa).

Disulfide bonds link cysteine 3-cysteine 17, cysteine 10-cysteine 23, cysteine 14-cysteine 46, cysteine 16-cysteine 31, and cysteine 25-cysteine 29.

As to expression, expressed by the venom gland.

It localises to the secreted. In terms of biological role, inhibits the inactivation of voltage-gated sodium channels (Nav). This chain is Delta-ctenitoxin-Asp2e, found in Ancylometes sp. (South American fishing spider).